The primary structure comprises 249 residues: Probable transcriptional regulatory protein FN1661 (249 aa).

The span at 1-10 (MSGHSKWNNI) shows a compositional bias: polar residues. Residues 1–20 (MSGHSKWNNIQHRKGAQDKK) are disordered.

Belongs to the TACO1 family.

The protein resides in the cytoplasm. The sequence is that of Probable transcriptional regulatory protein FN1661 from Fusobacterium nucleatum subsp. nucleatum (strain ATCC 25586 / DSM 15643 / BCRC 10681 / CIP 101130 / JCM 8532 / KCTC 2640 / LMG 13131 / VPI 4355).